Here is a 141-residue protein sequence, read N- to C-terminus: Large ribosomal subunit protein uL16 (141 aa).

Positions 1-21 (MLMPKRVKYRKQQRGHNRGMA) are disordered.

Belongs to the universal ribosomal protein uL16 family. In terms of assembly, part of the 50S ribosomal subunit.

Its function is as follows. Binds 23S rRNA and is also seen to make contacts with the A and possibly P site tRNAs. This Roseiflexus castenholzii (strain DSM 13941 / HLO8) protein is Large ribosomal subunit protein uL16.